Reading from the N-terminus, the 448-residue chain is Asparagine--tRNA ligase (448 aa).

Belongs to the class-II aminoacyl-tRNA synthetase family. Homodimer.

It is found in the cytoplasm. It carries out the reaction tRNA(Asn) + L-asparagine + ATP = L-asparaginyl-tRNA(Asn) + AMP + diphosphate + H(+). This is Asparagine--tRNA ligase from Streptococcus suis (strain 98HAH33).